The primary structure comprises 869 residues: Aminopeptidase N (869 aa).

Substrate contacts are provided by residues E122 and 262 to 266; that span reads GAMEN. H298 provides a ligand contact to Zn(2+). The Proton acceptor role is filled by E299. The Zn(2+) site is built by H302 and E321.

The protein belongs to the peptidase M1 family. Requires Zn(2+) as cofactor.

It is found in the cell inner membrane. The enzyme catalyses Release of an N-terminal amino acid, Xaa-|-Yaa- from a peptide, amide or arylamide. Xaa is preferably Ala, but may be most amino acids including Pro (slow action). When a terminal hydrophobic residue is followed by a prolyl residue, the two may be released as an intact Xaa-Pro dipeptide.. Its function is as follows. Aminopeptidase N is involved in the degradation of intracellular peptides generated by protein breakdown during normal growth as well as in response to nutrient starvation. The sequence is that of Aminopeptidase N (pepN) from Haemophilus influenzae (strain ATCC 51907 / DSM 11121 / KW20 / Rd).